The primary structure comprises 103 residues: Large ribosomal subunit protein bL21 (103 aa).

The protein belongs to the bacterial ribosomal protein bL21 family. As to quaternary structure, part of the 50S ribosomal subunit. Contacts protein L20.

In terms of biological role, this protein binds to 23S rRNA in the presence of protein L20. In Cupriavidus necator (strain ATCC 17699 / DSM 428 / KCTC 22496 / NCIMB 10442 / H16 / Stanier 337) (Ralstonia eutropha), this protein is Large ribosomal subunit protein bL21.